The chain runs to 321 residues: Ribosomal RNA small subunit methyltransferase H (321 aa).

S-adenosyl-L-methionine-binding positions include 40–42 (GGH), Asp60, Phe84, Asp106, and Gln113.

The protein belongs to the methyltransferase superfamily. RsmH family.

Its subcellular location is the cytoplasm. The catalysed reaction is cytidine(1402) in 16S rRNA + S-adenosyl-L-methionine = N(4)-methylcytidine(1402) in 16S rRNA + S-adenosyl-L-homocysteine + H(+). Functionally, specifically methylates the N4 position of cytidine in position 1402 (C1402) of 16S rRNA. This is Ribosomal RNA small subunit methyltransferase H from Haemophilus influenzae (strain PittEE).